Here is a 239-residue protein sequence, read N- to C-terminus: THAP domain-containing protein 3 (239 aa).

Residues 1-82 form a THAP-type zinc finger; the sequence is MPKSCAARQC…LKHNAVPTVF (82 aa). 2 disordered regions span residues 88–125 and 139–174; these read PQLV…LGRK and VGGL…PTQP. The HCFC1-binding motif (HBM) motif lies at 176–179; the sequence is DHSY.

Component of a THAP1/THAP3-HCFC1-OGT complex that contains at least, either THAP1 or THAP3, HCFC1 and OGT. Interacts directly with OGT and HCFC1 (via its HBM).

Functionally, component of a THAP1/THAP3-HCFC1-OGT complex that is required for the regulation of the transcriptional activity of RRM1. This Bos taurus (Bovine) protein is THAP domain-containing protein 3 (THAP3).